Reading from the N-terminus, the 549-residue chain is MARDATKLEATVAKLKKHWAESAPRDMRAAFSADPGRFGRYSLCLDDLLFDWSKCRVNDETMALLKELAVAADVEGRRAAMFAGEHINNTEDRAVLHVALRDTSSKEVLVDGHNVLPDVKHVLDRMAAFADGIRSGALKGATGRKITDIVNIGIGGSDLGPVMATLALAPYHDGPRAHFVSNIDGAHIADTLSPLDPASTLIIVASKTFTTIETMTNAQTARKWVADTLGEAAVGAHFAAVSTALDKVAAFGIPEDRVFGFWDWVGGRYSVWSAIGLPVMIAVGPDNFRKFLAGAHAMDVHFRDAPLEKNLPVMLGLIGYWHRAICGYGSRAIIPYDQRLSRLPAYLQQLDMESNGKSVTLDGKPVSGPTGPVVWGEPGTNGQHAFFQLLHQGTDTIPLEFIVAAKGHEPTLDHQHEMLMANCLAQSEALMKGRTLDEARAQLQAKNLPASQVERIAPHRVFSGNRPSLTLIHDMLDPYALGRLIALYEHRVFVEAQIFGINAFDQWGVELGKELATELLPVVSGKEGASGRDASTQGLVAHLHARRKA.

Glutamate 353 acts as the Proton donor in catalysis. Active-site residues include histidine 384 and lysine 513.

The protein belongs to the GPI family.

The protein resides in the cytoplasm. It carries out the reaction alpha-D-glucose 6-phosphate = beta-D-fructose 6-phosphate. It functions in the pathway carbohydrate biosynthesis; gluconeogenesis. Its pathway is carbohydrate degradation; glycolysis; D-glyceraldehyde 3-phosphate and glycerone phosphate from D-glucose: step 2/4. Functionally, catalyzes the reversible isomerization of glucose-6-phosphate to fructose-6-phosphate. This Brucella canis (strain ATCC 23365 / NCTC 10854 / RM-666) protein is Glucose-6-phosphate isomerase.